The following is a 332-amino-acid chain: Phospho-N-acetylmuramoyl-pentapeptide-transferase (332 aa).

8 consecutive transmembrane segments (helical) span residues 9 to 29 (IYTIIIGFFITLILGPLIIPF), 55 to 75 (TIGGLIIIASVLVTSFTAGLI), 79 to 99 (LWVAIGAMVAFGLIGFIDDFI), 115 to 135 (MSLQIIVAVFLAIYQSNISVM), 155 to 175 (IPQYLDLGILYIPFIVFVVVA), 196 to 216 (IVAAFFSILAMEWGYPSLAIF), 253 to 273 (AVAILMNVALIVPIVGGIYFA), and 312 to 332 (VVIVFWIVTVILCLIGMLGLN).

This sequence belongs to the glycosyltransferase 4 family. MraY subfamily. Requires Mg(2+) as cofactor.

It localises to the cell membrane. The catalysed reaction is UDP-N-acetyl-alpha-D-muramoyl-L-alanyl-gamma-D-glutamyl-meso-2,6-diaminopimeloyl-D-alanyl-D-alanine + di-trans,octa-cis-undecaprenyl phosphate = di-trans,octa-cis-undecaprenyl diphospho-N-acetyl-alpha-D-muramoyl-L-alanyl-D-glutamyl-meso-2,6-diaminopimeloyl-D-alanyl-D-alanine + UMP. The protein operates within cell wall biogenesis; peptidoglycan biosynthesis. In terms of biological role, catalyzes the initial step of the lipid cycle reactions in the biosynthesis of the cell wall peptidoglycan: transfers peptidoglycan precursor phospho-MurNAc-pentapeptide from UDP-MurNAc-pentapeptide onto the lipid carrier undecaprenyl phosphate, yielding undecaprenyl-pyrophosphoryl-MurNAc-pentapeptide, known as lipid I. This Alkaliphilus oremlandii (strain OhILAs) (Clostridium oremlandii (strain OhILAs)) protein is Phospho-N-acetylmuramoyl-pentapeptide-transferase.